The following is a 511-amino-acid chain: Pancreatic alpha-amylase (511 aa).

A signal peptide spans 1–15 (MKFFLLLFTIGFCWA). Gln16 carries the post-translational modification Pyrrolidone carboxylic acid. Disulfide bonds link Cys43/Cys101, Cys85/Cys130, and Cys156/Cys175. Positions 115, 173, and 182 each coordinate Ca(2+). Residue Arg210 coordinates chloride. Asp212 (nucleophile) is an active-site residue. Position 216 (His216) interacts with Ca(2+). The active-site Proton donor is Glu248. Residues Asn313 and Arg352 each coordinate chloride. Disulfide bonds link Cys393-Cys399 and Cys465-Cys477. Asn476 carries N-linked (GlcNAc...) asparagine glycosylation.

This sequence belongs to the glycosyl hydrolase 13 family. As to quaternary structure, monomer. Binds to the sea anemone inhibitor helianthamide. Ca(2+) serves as cofactor. Requires chloride as cofactor. In terms of tissue distribution, detected in pancreas (at protein level).

It localises to the secreted. The protein localises to the extracellular space. The enzyme catalyses Endohydrolysis of (1-&gt;4)-alpha-D-glucosidic linkages in polysaccharides containing three or more (1-&gt;4)-alpha-linked D-glucose units.. This chain is Pancreatic alpha-amylase (AMY2A), found in Homo sapiens (Human).